Reading from the N-terminus, the 303-residue chain is Eukaryotic translation initiation factor 3 subunit G (303 aa).

The interval Met1 to Asp38 is disordered. One can recognise an RRM domain in the interval Ala223 to Lys301.

Belongs to the eIF-3 subunit G family. Component of the eukaryotic translation initiation factor 3 (eIF-3) complex.

The protein resides in the cytoplasm. In terms of biological role, RNA-binding component of the eukaryotic translation initiation factor 3 (eIF-3) complex, which is involved in protein synthesis of a specialized repertoire of mRNAs and, together with other initiation factors, stimulates binding of mRNA and methionyl-tRNAi to the 40S ribosome. The eIF-3 complex specifically targets and initiates translation of a subset of mRNAs involved in cell proliferation. This subunit can bind 18S rRNA. This chain is Eukaryotic translation initiation factor 3 subunit G, found in Chaetomium globosum (strain ATCC 6205 / CBS 148.51 / DSM 1962 / NBRC 6347 / NRRL 1970) (Soil fungus).